Here is a 274-residue protein sequence, read N- to C-terminus: Dermonecrotic toxin SdSicTox-betaIIB2i (274 aa).

The active site involves H5. E25 and D27 together coordinate Mg(2+). H41 serves as the catalytic Nucleophile. 2 disulfides stabilise this stretch: C45/C51 and C47/C190. Mg(2+) is bound at residue D85.

Belongs to the arthropod phospholipase D family. Class II subfamily. Mg(2+) serves as cofactor. In terms of tissue distribution, expressed by the venom gland.

The protein resides in the secreted. The catalysed reaction is an N-(acyl)-sphingosylphosphocholine = an N-(acyl)-sphingosyl-1,3-cyclic phosphate + choline. It carries out the reaction an N-(acyl)-sphingosylphosphoethanolamine = an N-(acyl)-sphingosyl-1,3-cyclic phosphate + ethanolamine. The enzyme catalyses a 1-acyl-sn-glycero-3-phosphocholine = a 1-acyl-sn-glycero-2,3-cyclic phosphate + choline. It catalyses the reaction a 1-acyl-sn-glycero-3-phosphoethanolamine = a 1-acyl-sn-glycero-2,3-cyclic phosphate + ethanolamine. Dermonecrotic toxins cleave the phosphodiester linkage between the phosphate and headgroup of certain phospholipids (sphingolipid and lysolipid substrates), forming an alcohol (often choline) and a cyclic phosphate. This toxin acts on sphingomyelin (SM). It may also act on ceramide phosphoethanolamine (CPE), lysophosphatidylcholine (LPC) and lysophosphatidylethanolamine (LPE), but not on lysophosphatidylserine (LPS), and lysophosphatidylglycerol (LPG). It acts by transphosphatidylation, releasing exclusively cyclic phosphate products as second products. Induces dermonecrosis, hemolysis, increased vascular permeability, edema, inflammatory response, and platelet aggregation. The polypeptide is Dermonecrotic toxin SdSicTox-betaIIB2i (Sicarius cf. damarensis (strain GJB-2008) (Six-eyed sand spider)).